Here is a 210-residue protein sequence, read N- to C-terminus: uncharacterized protein (210 aa).

Residues 2 to 91 (SRHPEVKWAQ…AEAKWWKKLV (90 aa)) form the CS domain. A disordered region spans residues 165 to 210 (GMGGMGGMDEFEDESDDEEEVSKPQDAEKAAEAGKSQESDAKTETS). Acidic residues predominate over residues 173-184 (DEFEDESDDEEE). Residues 185-210 (VSKPQDAEKAAEAGKSQESDAKTETS) are compositionally biased toward basic and acidic residues.

This is an uncharacterized protein from Oryza sativa subsp. indica (Rice).